We begin with the raw amino-acid sequence, 105 residues long: Large ribosomal subunit protein uL24 (105 aa).

It belongs to the universal ribosomal protein uL24 family. Part of the 50S ribosomal subunit.

In terms of biological role, one of two assembly initiator proteins, it binds directly to the 5'-end of the 23S rRNA, where it nucleates assembly of the 50S subunit. One of the proteins that surrounds the polypeptide exit tunnel on the outside of the subunit. The polypeptide is Large ribosomal subunit protein uL24 (Xylella fastidiosa (strain M12)).